The primary structure comprises 548 residues: Probable 2,3-bisphosphoglycerate-independent phosphoglycerate mutase (548 aa).

Mn(2+)-binding residues include aspartate 20 and serine 73. Serine 73 acts as the Phosphoserine intermediate in catalysis. Substrate-binding positions include histidine 134, 164-165 (RD), arginine 200, arginine 207, 279-282 (RGDR), and lysine 354. Positions 422, 426, 463, 464, and 493 each coordinate Mn(2+).

This sequence belongs to the BPG-independent phosphoglycerate mutase family. Monomer. The cofactor is Mn(2+).

The catalysed reaction is (2R)-2-phosphoglycerate = (2R)-3-phosphoglycerate. The protein operates within carbohydrate degradation; glycolysis; pyruvate from D-glyceraldehyde 3-phosphate: step 3/5. Its function is as follows. Catalyzes the interconversion of 2-phosphoglycerate and 3-phosphoglycerate. The protein is Probable 2,3-bisphosphoglycerate-independent phosphoglycerate mutase (gpmI) of Leptospira interrogans serogroup Icterohaemorrhagiae serovar Lai (strain 56601).